Consider the following 83-residue polypeptide: Conotoxin p21a (83 aa).

Residues proline 24 and proline 43 each carry the 4-hydroxyproline; partial modification. Histidine 83 is modified (histidine amide).

As to quaternary structure, may form a non-covalent dimer. Post-translationally, contains 5 disulfide bonds. Expressed by the venom duct.

It localises to the secreted. This is Conotoxin p21a from Conus purpurascens (Purple cone).